Consider the following 231-residue polypeptide: MKILRKLLFWLILVPILLVLLMQLYFFLQIGWWVNHNPDSTSFMRQQLSVLQDKNPQAQLKHKWVPYKRISNNLKRAIIASEDSNFSGHEGIDWDALEKAYEKNVRKGKVVAGGSTITQQLAKNLFLSGDRSYIRKGQEVVITYMLEYWMDKERIFEIYLNVVEWGVGVFGAEAAAQHYYGTSAAQLSAPQAARLAVMLPNPRFYDTHRGTAYLGRRTDLILRRMGSAELP.

A helical transmembrane segment spans residues Leu7–Phe27.

The protein belongs to the glycosyltransferase 51 family.

It is found in the cell inner membrane. The enzyme catalyses [GlcNAc-(1-&gt;4)-Mur2Ac(oyl-L-Ala-gamma-D-Glu-L-Lys-D-Ala-D-Ala)](n)-di-trans,octa-cis-undecaprenyl diphosphate + beta-D-GlcNAc-(1-&gt;4)-Mur2Ac(oyl-L-Ala-gamma-D-Glu-L-Lys-D-Ala-D-Ala)-di-trans,octa-cis-undecaprenyl diphosphate = [GlcNAc-(1-&gt;4)-Mur2Ac(oyl-L-Ala-gamma-D-Glu-L-Lys-D-Ala-D-Ala)](n+1)-di-trans,octa-cis-undecaprenyl diphosphate + di-trans,octa-cis-undecaprenyl diphosphate + H(+). Its pathway is cell wall biogenesis; peptidoglycan biosynthesis. In terms of biological role, peptidoglycan polymerase that catalyzes glycan chain elongation from lipid-linked precursors. The sequence is that of Biosynthetic peptidoglycan transglycosylase from Herminiimonas arsenicoxydans.